We begin with the raw amino-acid sequence, 206 residues long: Small ribosomal subunit protein uS4 (206 aa).

An S4 RNA-binding domain is found at 96–156 (GRLDNVVYRM…EKAKKQSRVK (61 aa)).

This sequence belongs to the universal ribosomal protein uS4 family. As to quaternary structure, part of the 30S ribosomal subunit. Contacts protein S5. The interaction surface between S4 and S5 is involved in control of translational fidelity.

In terms of biological role, one of the primary rRNA binding proteins, it binds directly to 16S rRNA where it nucleates assembly of the body of the 30S subunit. Its function is as follows. With S5 and S12 plays an important role in translational accuracy. This chain is Small ribosomal subunit protein uS4, found in Shigella flexneri.